The chain runs to 233 residues: MTTYSTDSQGKFIPATQRPDGTWRKPRRVRDGYVPQEEVPLYESKGKQFAQKPALPPGLSPEVVQKAKEKRERERLRQAREEQQRKEQQNKKQQAGALPPGVLAVDGGAVGGNNDKQKPGAKQPQQHTKSSQQKSTTAAAAAVSNNSDSTVDELASALASGAQLAGADAQQLEVAKKLRKLRKKIREIEAIETKLRSTDGPKLDKDQLEKVKRKPDILQEIEELEVQYSAGAM.

The disordered stretch occupies residues 1 to 153 (MTTYSTDSQG…SNNSDSTVDE (153 aa)). Residues 62-97 (EVVQKAKEKRERERLRQAREEQQRKEQQNKKQQAGA) adopt a coiled-coil conformation. Positions 65–90 (QKAKEKRERERLRQAREEQQRKEQQN) are enriched in basic and acidic residues. The segment covering 122–142 (KQPQQHTKSSQQKSTTAAAAA) has biased composition (low complexity). Residues 167–199 (ADAQQLEVAKKLRKLRKKIREIEAIETKLRSTD) are a coiled coil.

This sequence belongs to the pym family. As to quaternary structure, interacts (via N-terminus) with mago and tsu/Y14; the interaction is direct.

The protein resides in the cytoplasm. Its subcellular location is the nucleus. Functionally, regulator of the exon junction complex (EJC), a multiprotein complex that associates immediately upstream of the exon-exon junction on mRNAs and serves as a positional landmarks for the intron exon structure of genes and directs post-transcriptional processes in the cytoplasm such as mRNA export, nonsense-mediated mRNA decay (NMD) or translation. The polypeptide is Partner of Y14 and mago (Anopheles gambiae (African malaria mosquito)).